Reading from the N-terminus, the 173-residue chain is Shikimate kinase 1 (173 aa).

14 to 19 (GAGKST) provides a ligand contact to ATP. Residue Ser18 coordinates Mg(2+). The substrate site is built by Asp36, Arg60, and Gly82. Arg120 serves as a coordination point for ATP. Arg140 is a substrate binding site.

This sequence belongs to the shikimate kinase family. In terms of assembly, monomer. Requires Mg(2+) as cofactor.

It is found in the cytoplasm. The catalysed reaction is shikimate + ATP = 3-phosphoshikimate + ADP + H(+). It functions in the pathway metabolic intermediate biosynthesis; chorismate biosynthesis; chorismate from D-erythrose 4-phosphate and phosphoenolpyruvate: step 5/7. Its function is as follows. Catalyzes the specific phosphorylation of the 3-hydroxyl group of shikimic acid using ATP as a cosubstrate. The sequence is that of Shikimate kinase 1 from Hamiltonella defensa subsp. Acyrthosiphon pisum (strain 5AT).